A 114-amino-acid polypeptide reads, in one-letter code: Photosystem II reaction center Psb28 protein (114 aa).

The protein belongs to the Psb28 family. Part of the photosystem II complex.

Its subcellular location is the plastid. It localises to the chloroplast thylakoid membrane. In Thalassiosira pseudonana (Marine diatom), this protein is Photosystem II reaction center Psb28 protein.